An 805-amino-acid polypeptide reads, in one-letter code: Angiotensin-converting enzyme 2 (805 aa).

An N-terminal signal peptide occupies residues 1–17 (MSSSSWLLLSLVAVTTA). Over 18 to 740 (QSLTEENAKT…LEPPYQPPVT (723 aa)) the chain is Extracellular. In terms of domain architecture, Peptidase M2 spans 19-607 (SLTEENAKTF…QNRNSFVGWN (589 aa)). Asn53 carries N-linked (GlcNAc...) asparagine glycosylation. Residues Cys133 and Cys141 are joined by a disulfide bond. Chloride is bound at residue Arg169. Substrate contacts are provided by residues Arg273 and 345 to 346 (HP). Cys344 and Cys361 are joined by a disulfide. His374 serves as a coordination point for Zn(2+). The active-site Proton acceptor is Glu375. His378 and Glu402 together coordinate Zn(2+). Chloride is bound by residues Trp477 and Lys481. The active-site Proton donor is the His505. Tyr515 is a binding site for substrate. A disulfide bridge connects residues Cys530 and Cys542. N-linked (GlcNAc...) asparagine glycans are attached at residues Asn536 and Asn546. One can recognise a Collectrin-like domain in the interval 614-805 (ADQSIKVRIS…QNSDDAQTSF (192 aa)). The interval 652-659 (RKYFSIIK) is essential for cleavage by ADAM17. Residues Asn660 and Asn690 are each glycosylated (N-linked (GlcNAc...) asparagine). The segment at 697-716 (RSEVEDAIRMSRGRINDVFG) is essential for cleavage by TMPRSS11D and TMPRSS2. Residues 741-761 (IWLIIFGVVMALVVVGIIILI) traverse the membrane as a helical segment. Topologically, residues 762–805 (VTGIKGRKKKNETKREENPYDSMDIGKGESNAGFQNSDDAQTSF) are cytoplasmic. A disordered region spans residues 771–805 (KNETKREENPYDSMDIGKGESNAGFQNSDDAQTSF). An LIR motif is present at residues 778–786 (ENPYDSMDI). At Tyr781 the chain carries Phosphotyrosine. An Endocytic sorting signal motif is present at residues 781–784 (YDSM). The SH2-binding signature appears at 781 to 785 (YDSMD). Residue Ser783 is modified to Phosphoserine. A Glycyl lysine isopeptide (Lys-Gly) (interchain with G-Cter in ubiquitin) cross-link involves residue Lys788. The short motif at 792-795 (NAGF) is the PTB element. Residues 793–805 (AGFQNSDDAQTSF) are compositionally biased toward polar residues. The PDZ-binding motif lies at 803–805 (TSF).

Belongs to the peptidase M2 family. As to quaternary structure, homodimer. Interacts with the catalytically active form of TMPRSS2. Interacts with SLC6A19; this interaction is essential for expression and function of SLC6A19 in intestine. Interacts with ITGA5:ITGB1. Probably interacts (via endocytic sorting signal motif) with AP2M1; the interaction is inhibited by phosphorylation of Tyr-781. Interacts (via PDZ-binding motif) with NHERF1 (via PDZ domains); the interaction may enhance ACE2 membrane residence. (Microbial infection) Weakly interacts with SARS-CoV S protein. Zn(2+) serves as cofactor. It depends on chloride as a cofactor. Proteolytic cleavage by ADAM17 generates a secreted form. Also cleaved by serine proteases: TMPRSS2, TMPRSS11D and HPN/TMPRSS1. In terms of processing, phosphorylated. Phosphorylation at Tyr-781 probably inhibits interaction with AP2M1 and enables interactions with proteins containing SH2 domains. Post-translationally, ubiquitinated. Ubiquitinated on Lys-788 via 'Lys-48'-linked ubiquitin. 'Lys-48'-linked deubiquitinated by USP50 on the Lys-788; leading to its stabilization. Expressed in heart, kidney and forebrain (at protein level). Expressed in the small intestine, with expression in the intestinal brush border (at protein level). Ubiquitously expressed, with highest levels in ileum, kidney and lung. In lung, expressed on vascular endothelial and airway epithelial cells. Also expressed at high levels in lung secretory club and goblet cells as well as in alveolar type 2 cells.

The protein resides in the secreted. Its subcellular location is the cell membrane. It is found in the cytoplasm. The protein localises to the cell projection. It localises to the cilium. The protein resides in the apical cell membrane. The enzyme catalyses angiotensin II + H2O = angiotensin-(1-7) + L-phenylalanine. It carries out the reaction angiotensin I + H2O = angiotensin-(1-9) + L-leucine. It catalyses the reaction bradykinin(1-8) + H2O = bradykinin(1-7) + L-phenylalanine. The catalysed reaction is neurotensin + H2O = neurotensin-(1-12) + L-leucine. The enzyme catalyses kinetensin + H2O = kinetensin-(1-8) + L-leucine. It carries out the reaction dynorphin A-(1-13) + H2O = dynorphin A-(1-12) + L-lysine. It catalyses the reaction apelin-13 + H2O = apelin-12 + L-phenylalanine. The catalysed reaction is [Pyr1]apelin-13 + H2O = [Pyr1]apelin-12 + L-phenylalanine. The enzyme catalyses apelin-17 + H2O = apelin-16 + L-phenylalanine. Its function is as follows. Essential counter-regulatory carboxypeptidase of the renin-angiotensin hormone system that is a critical regulator of blood volume, systemic vascular resistance, and thus cardiovascular homeostasis. Converts angiotensin I to angiotensin 1-9, a nine-amino acid peptide with anti-hypertrophic effects in cardiomyocytes, and angiotensin II to angiotensin 1-7, which then acts as a beneficial vasodilator and anti-proliferation agent, counterbalancing the actions of the vasoconstrictor angiotensin II. Also removes the C-terminal residue from three other vasoactive peptides, neurotensin, kinetensin, and des-Arg bradykinin, but is not active on bradykinin. Also cleaves other biological peptides, such as apelins, casomorphins and dynorphin A. By cleavage of angiotensin II, may be an important regulator of heart function. By cleavage of angiotensin II, may also have a protective role in acute lung injury. Plays an important role in amino acid transport by acting as binding partner of amino acid transporter SLC6A19, regulating its trafficking on the cell surface and its activity. The protein is Angiotensin-converting enzyme 2 (Ace2) of Mus musculus (Mouse).